A 411-amino-acid chain; its full sequence is Protein phosphatase 1 regulatory subunit 36 (411 aa).

Interacts with PPP1CA.

Its function is as follows. Inhibits phosphatase activity of protein phosphatase 1 (PP1) complexes. This chain is Protein phosphatase 1 regulatory subunit 36 (Ppp1r36), found in Rattus norvegicus (Rat).